The primary structure comprises 334 residues: Glyceraldehyde-3-phosphate dehydrogenase B (334 aa).

NAD(+) contacts are provided by residues Arg-12 to Ile-13, Asp-34, and Ser-121. Residues Ser-149–Thr-151, Thr-180, Thr-209–Gly-210, and Arg-232 contribute to the D-glyceraldehyde 3-phosphate site. Residue Cys-150 is the Nucleophile of the active site. NAD(+) is bound at residue Asn-314.

The protein belongs to the glyceraldehyde-3-phosphate dehydrogenase family. As to quaternary structure, homotetramer.

It carries out the reaction D-glyceraldehyde 3-phosphate + phosphate + NAD(+) = (2R)-3-phospho-glyceroyl phosphate + NADH + H(+). It functions in the pathway carbohydrate degradation; glycolysis; pyruvate from D-glyceraldehyde 3-phosphate: step 1/5. Glyceraldehyde-3-phosphate dehydrogenase; part of the gene cluster that mediates the biosynthesis of heptelidic acid (HA), a sesquiterpene lactone that acts as an inhibitor of glyceraldehyde-3-phosphatedehydrogenase (GAPDH) and a growth inhibitor of the salt-tolerant lactic acid bacteria in soy sauce brewing. The GAPDPH hepG/gdpB shows much higher resistance to HA than the GAPDH gpdA located outside of the cluster, but it does not seem to act in self-resistance. The sequence is that of Glyceraldehyde-3-phosphate dehydrogenase B from Aspergillus oryzae (strain ATCC 42149 / RIB 40) (Yellow koji mold).